Consider the following 364-residue polypeptide: Aminomethyltransferase (364 aa).

The protein belongs to the GcvT family. As to quaternary structure, the glycine cleavage system is composed of four proteins: P, T, L and H.

It carries out the reaction N(6)-[(R)-S(8)-aminomethyldihydrolipoyl]-L-lysyl-[protein] + (6S)-5,6,7,8-tetrahydrofolate = N(6)-[(R)-dihydrolipoyl]-L-lysyl-[protein] + (6R)-5,10-methylene-5,6,7,8-tetrahydrofolate + NH4(+). Functionally, the glycine cleavage system catalyzes the degradation of glycine. This chain is Aminomethyltransferase, found in Shewanella sediminis (strain HAW-EB3).